A 60-amino-acid polypeptide reads, in one-letter code: Disagregin (60 aa).

The short motif at Arg14–Asp16 is the Cell attachment site; atypical element.

Expressed in salivary glands.

Its subcellular location is the secreted. Tick salivary platelet aggregation inhibitor that plays an important part in the anti-hemostatic strategy of ticks. Inhibits fibrinogen interaction with platelets. Acts by binding (in a divalent metal ion dependent manner) to the glycoprotein IIb-IIIa receptor (ITGA2B/ITGB3) on the platelet surface and inhibits aggregation induced by ADP (IC(50)=99-104 nM), thrombin, collagen (IC(50)=64 nM) platelet-activating factor and collagen. Interacts to unstimulated platelets (Kd=42.5 nM) and to ADP-stimulated platelets (Kd=39.4 nM). In contrast to many disintegrins which only interact with the beta-3 subunit, interacts with the two subunits (alpha-IIb and beta-3). Under flow conditions, reduces and delays platelet adhesion, aggregation, and fibrin formation. This chain is Disagregin, found in Ornithodoros moubata (Soft tick).